Here is a 610-residue protein sequence, read N- to C-terminus: UvrABC system protein C (610 aa).

A GIY-YIG domain is found at 16–94; the sequence is SQPGVYRMYD…IKLYQPRYNV (79 aa). The 36-residue stretch at 204–239 folds into the UVR domain; sequence DQVLTQLIARMEKASQDLAFEEAARIRDQIQAVRRV.

It belongs to the UvrC family. As to quaternary structure, interacts with UvrB in an incision complex.

It localises to the cytoplasm. Its function is as follows. The UvrABC repair system catalyzes the recognition and processing of DNA lesions. UvrC both incises the 5' and 3' sides of the lesion. The N-terminal half is responsible for the 3' incision and the C-terminal half is responsible for the 5' incision. In Salmonella dublin (strain CT_02021853), this protein is UvrABC system protein C.